A 995-amino-acid polypeptide reads, in one-letter code: Pheromone-regulated membrane protein 10 (995 aa).

Disordered stretches follow at residues 1–217, 253–299, 326–407, and 425–508; these read MSSH…GEKH, GRVL…AVEM, DQSF…YIAP, and NPQD…NPDQ. Residues 74-88 show a composition bias toward low complexity; the sequence is SNSSTTNNSTESSGS. Basic and acidic residues predominate over residues 110–121; it reads VKGESGDAHEGS. The span at 157–166 shows a compositional bias: low complexity; sequence SRGSVGSSSS. Residues 170–187 show a composition bias toward basic and acidic residues; it reads KGSDDVNEKETNLDHDYD. A compositionally biased stretch (gly residues) spans 259–269; that stretch reads GSGGGGGGGLI. Positions 283 to 296 are enriched in acidic residues; it reads EEKEVGGGGEDDGA. Residues 326-347 are compositionally biased toward polar residues; the sequence is DQSFTYDEPNQSAGSSRNSTAP. Composition is skewed to basic and acidic residues over residues 359–371 and 385–396; these read DDHK…DQGK and GNDDPEDQHLLL. Residues 495–506 are compositionally biased toward acidic residues; it reads EADDEDEDEENP. A run of 10 helical transmembrane segments spans residues 678–698, 700–720, 726–746, 752–772, 794–814, 833–850, 858–878, 881–901, 906–926, and 965–985; these read VFLY…GGWL, IPVT…VSSM, SVFE…IGSI, FCFS…YIIL, IIYS…FGWV, KYRI…GLIN, PVMM…GKHF, VPEF…NVYS, GMAV…GIAS, and VEVS…VYPF.

Belongs to the ThrE exporter (TC 2.A.79) family.

It is found in the membrane. The polypeptide is Pheromone-regulated membrane protein 10 (Pichia sorbitophila (strain ATCC MYA-4447 / BCRC 22081 / CBS 7064 / NBRC 10061 / NRRL Y-12695) (Hybrid yeast)).